The primary structure comprises 313 residues: tRNA uridine(34) hydroxylase (313 aa).

Residues 124–218 (SDPEVLLIDT…YLEEVPQQES (95 aa)) enclose the Rhodanese domain. Residue Cys178 is the Cysteine persulfide intermediate of the active site.

This sequence belongs to the TrhO family.

The catalysed reaction is uridine(34) in tRNA + AH2 + O2 = 5-hydroxyuridine(34) in tRNA + A + H2O. Functionally, catalyzes oxygen-dependent 5-hydroxyuridine (ho5U) modification at position 34 in tRNAs. The polypeptide is tRNA uridine(34) hydroxylase (Pseudomonas fluorescens (strain ATCC BAA-477 / NRRL B-23932 / Pf-5)).